The sequence spans 340 residues: Ferredoxin--NADP reductase (340 aa).

Residues Asp33, Gln41, Tyr46, Ala86, Phe120, Asp286, and Thr327 each coordinate FAD.

Belongs to the ferredoxin--NADP reductase type 2 family. In terms of assembly, homodimer. Requires FAD as cofactor.

The catalysed reaction is 2 reduced [2Fe-2S]-[ferredoxin] + NADP(+) + H(+) = 2 oxidized [2Fe-2S]-[ferredoxin] + NADPH. The chain is Ferredoxin--NADP reductase from Rickettsia conorii (strain ATCC VR-613 / Malish 7).